A 797-amino-acid chain; its full sequence is Probable exo-1,4-beta-xylosidase xlnD (797 aa).

Positions 1-20 (MPGAASIVAVLAALLPTALG) are cleaved as a signal peptide. N-linked (GlcNAc...) asparagine glycosylation is found at asparagine 23, asparagine 87, asparagine 142, and asparagine 237. Aspartate 310 is an active-site residue. N-linked (GlcNAc...) asparagine glycosylation is found at asparagine 326, asparagine 391, asparagine 404, asparagine 442, asparagine 479, asparagine 521, asparagine 617, asparagine 644, asparagine 657, asparagine 684, and asparagine 706.

It belongs to the glycosyl hydrolase 3 family.

It localises to the secreted. The enzyme catalyses Hydrolysis of (1-&gt;4)-beta-D-xylans, to remove successive D-xylose residues from the non-reducing termini.. It functions in the pathway glycan degradation; xylan degradation. Its function is as follows. Xylan 1,4-beta-xylosidase involved in the hydrolysis of xylan, a major structural heterogeneous polysaccharide found in plant biomass representing the second most abundant polysaccharide in the biosphere, after cellulose. The sequence is that of Probable exo-1,4-beta-xylosidase xlnD (xlnD) from Aspergillus flavus (strain ATCC 200026 / FGSC A1120 / IAM 13836 / NRRL 3357 / JCM 12722 / SRRC 167).